Consider the following 94-residue polypeptide: Co-chaperonin GroES (94 aa).

It belongs to the GroES chaperonin family. As to quaternary structure, heptamer of 7 subunits arranged in a ring. Interacts with the chaperonin GroEL.

The protein localises to the cytoplasm. Functionally, together with the chaperonin GroEL, plays an essential role in assisting protein folding. The GroEL-GroES system forms a nano-cage that allows encapsulation of the non-native substrate proteins and provides a physical environment optimized to promote and accelerate protein folding. GroES binds to the apical surface of the GroEL ring, thereby capping the opening of the GroEL channel. The sequence is that of Co-chaperonin GroES from Limosilactobacillus reuteri (strain DSM 20016) (Lactobacillus reuteri).